Consider the following 1011-residue polypeptide: Poly [ADP-ribose] polymerase 1 (1011 aa).

2 PARP-type zinc fingers span residues 9–91 (YRAE…ETGA) and 113–203 (FAAE…PATK). Residues cysteine 21, cysteine 24, histidine 53, cysteine 56, cysteine 125, cysteine 128, histidine 159, and cysteine 162 each contribute to the Zn(2+) site. The interval 198–235 (QLPATKTEGKRKGEEVDGNVVAKKKSRKEKEKESKQEK) is disordered. 2 short sequence motifs (nuclear localization signal) span residues 207–209 (KRK) and 220–225 (KKKSRK). One can recognise a PADR1 zinc-binding domain in the interval 224-358 (RKEKEKESKQ…CKKQDRIFPP (135 aa)). Over residues 225 to 235 (KEKEKESKQEK) the composition is skewed to basic and acidic residues. Residues 289-331 (GALLPCEECKGQFVFKSDAYYCSGDITAWTKCVAKTQTPNRKD) form a zinc ribbon region. 4 residues coordinate Zn(2+): cysteine 294, cysteine 297, cysteine 310, and cysteine 320. The disordered stretch occupies residues 359 to 378 (EAATVNSAPPPPASAPLTET). The segment at 371–522 (ASAPLTETVT…PSKSEKKMKL (152 aa)) is automodification domain. The region spanning 382–473 (PQDKPLTNMK…KGFQELLSLH (92 aa)) is the BRCT domain. 17 positions are modified to polyADP-ribosyl glutamic acid: glutamate 403, glutamate 404, glutamate 410, glutamate 411, glutamate 432, glutamate 434, glutamate 441, glutamate 442, glutamate 453, glutamate 454, glutamate 468, glutamate 481, glutamate 485, glutamate 488, glutamate 509, glutamate 510, and glutamate 517. Residues 496-519 (SKPANMKSAGKVKEEQGPSKSEKK) form a disordered region. A compositionally biased stretch (basic and acidic residues) spans 506–519 (KVKEEQGPSKSEKK). A WGR domain is found at 539–635 (SAHVFEKGGK…KNFTKYPKKF (97 aa)). The region spanning 659–776 (KSKLAKPIQD…DIEVAYSLLR (118 aa)) is the PARP alpha-helical domain. Positions 785–1011 (DPIDINYEKL…LKFNYKTSLW (227 aa)) constitute a PARP catalytic domain. NAD(+) is bound by residues 859-861 (HGS), glycine 868, arginine 875, and serine 901. Glutamate 985 (for poly [ADP-ribose] polymerase activity) is an active-site residue.

This sequence belongs to the ARTD/PARP family. As to quaternary structure, homodimer; PARP-type zinc-fingers from separate parp1 molecules form a dimer module that specifically recognizes DNA strand breaks. In terms of processing, poly-ADP-ribosylated on serine, glutamate and aspartate residues by autocatalysis. Auto-ADP-ribosylation on serine takes place following interaction with HPF1. Auto poly-ADP-ribosylation on serine residues promotes its dissociation from chromatin.

The protein resides in the chromosome. The protein localises to the nucleus. It localises to the nucleolus. It is found in the cytoplasm. Its subcellular location is the cytosol. It catalyses the reaction NAD(+) + (ADP-D-ribosyl)n-acceptor = nicotinamide + (ADP-D-ribosyl)n+1-acceptor + H(+).. The enzyme catalyses L-seryl-[protein] + NAD(+) = O-(ADP-D-ribosyl)-L-seryl-[protein] + nicotinamide + H(+). It carries out the reaction L-aspartyl-[protein] + NAD(+) = 4-O-(ADP-D-ribosyl)-L-aspartyl-[protein] + nicotinamide. The catalysed reaction is L-glutamyl-[protein] + NAD(+) = 5-O-(ADP-D-ribosyl)-L-glutamyl-[protein] + nicotinamide. It catalyses the reaction L-tyrosyl-[protein] + NAD(+) = O-(ADP-D-ribosyl)-L-tyrosyl-[protein] + nicotinamide + H(+). The enzyme catalyses L-histidyl-[protein] + NAD(+) = N(tele)-(ADP-D-ribosyl)-L-histidyl-[protein] + nicotinamide + H(+). ADP-ribosyltransferase activity is regulated via an allosteric activation mechanism. In absence of activation signal, parp1 is autoinhibited by the PARP alpha-helical domain (also named HD region), which prevents effective NAD(+)-binding. Activity is highly stimulated by signals, such as DNA strand breaks. Binding to damaged DNA unfolds the PARP alpha-helical domain, relieving autoinhibition. Poly-ADP-ribosyltransferase activity is tightly regulated and parp1 is removed from damaged chromatin following initial poly-ADP-ribosylation of chromatin to avoid prolonged residence (trapping) that has cytotoxic consequences. A number of factors or post-translational modifications (auto-poly-ADP-ribosylation) promote parp1 removal from chromatin. Its function is as follows. Poly-ADP-ribosyltransferase that mediates poly-ADP-ribosylation of proteins and plays a key role in DNA repair. Mediates glutamate, aspartate, serine, histidine or tyrosine ADP-ribosylation of proteins: the ADP-D-ribosyl group of NAD(+) is transferred to the acceptor carboxyl group of target residues and further ADP-ribosyl groups are transferred to the 2'-position of the terminal adenosine moiety, building up a polymer with an average chain length of 20-30 units. Serine ADP-ribosylation of proteins constitutes the primary form of ADP-ribosylation of proteins in response to DNA damage. Specificity for the different amino acids is conferred by interacting factors, such as hpf1 and nmnat1. Following interaction with hpf1, catalyzes serine ADP-ribosylation of target proteins; hpf1 confers serine specificity by completing the parp1 active site. Also catalyzes tyrosine ADP-ribosylation of target proteins following interaction with hpf1. Following interaction with nmnat1, catalyzes glutamate and aspartate ADP-ribosylation of target proteins; nmnat1 confers glutamate and aspartate specificity. Parp1 initiates the repair of DNA breaks: recognizes and binds DNA breaks within chromatin and recruits hpf1, licensing serine ADP-ribosylation of target proteins, such as histones (H2BS6ADPr and H3S10ADPr), thereby promoting decompaction of chromatin and the recruitment of repair factors leading to the reparation of DNA strand breaks. In addition to base excision repair (BER) pathway, also involved in double-strand breaks (DSBs) repair. Mediates the poly-ADP-ribosylation of a number of proteins. In addition to proteins, also able to ADP-ribosylate DNA: catalyzes ADP-ribosylation of DNA strand break termini containing terminal phosphates and a 2'-OH group in single- and double-stranded DNA, respectively. Parp1-mediated DNA repair in neurons plays a role in sleep: senses DNA damage in neurons and promotes sleep, facilitating efficient DNA repair. In addition to DNA repair, also involved in other processes, such as transcription regulation, programmed cell death, membrane repair, adipogenesis and innate immunity. Acts as a repressor of transcription: binds to nucleosomes and modulates chromatin structure in a manner similar to histone H1, thereby altering RNA polymerase II. Acts both as a positive and negative regulator of transcription elongation, depending on the context. Poly-ADP-ribose chains generated by parp1 also play a role in poly-ADP-ribose-dependent cell death, a process named parthanatos. Also acts as a negative regulator of the cGAS-STING pathway by mediating poly-ADP-ribosylation and inactivation of cgas. Acts as a negative regulator of adipogenesis by catalyzing poly ADP-ribosylation of histone H2B on 'Glu-35' (H2BE35ADPr). In Gallus gallus (Chicken), this protein is Poly [ADP-ribose] polymerase 1 (PARP1).